The primary structure comprises 1040 residues: Vitamin B12-dependent ribonucleotide reductase (1040 aa).

Residues Ser169, 213-214 (AC), Gly242, 420-424 (NPCSE), and 604-608 (PTGTI) each bind substrate. A disulfide bridge links Cys214 with Cys433. Asn420 functions as the Proton acceptor in the catalytic mechanism. The Cysteine radical intermediate role is filled by Cys422. Residue Glu424 is the Proton acceptor of the active site. Disordered stretches follow at residues 909 to 932 (SAEG…GATA) and 969 to 988 (GSAT…SDGA). The segment covering 969–979 (GSATNGHSNGQ) has biased composition (polar residues).

Belongs to the ribonucleoside diphosphate reductase class-2 family. Adenosylcob(III)alamin serves as cofactor.

It catalyses the reaction a 2'-deoxyribonucleoside 5'-diphosphate + [thioredoxin]-disulfide + H2O = a ribonucleoside 5'-diphosphate + [thioredoxin]-dithiol. Functionally, catalyzes the reduction of ribonucleotides to deoxyribonucleotides. May function to provide a pool of deoxyribonucleotide precursors for DNA repair during oxygen limitation and/or for immediate growth after restoration of oxygen. In Rhodopirellula baltica (strain DSM 10527 / NCIMB 13988 / SH1), this protein is Vitamin B12-dependent ribonucleotide reductase (nrdJ).